A 423-amino-acid polypeptide reads, in one-letter code: TNF receptor-associated factor family protein DDB_G0277243 (423 aa).

The RING-type; degenerate zinc-finger motif lies at 20-66 (CSICVDPVLNSLPLEQHQALSCKNGHLLCQACWGKQLALRKECCICK). TRAF-type zinc fingers lie at residues 124–179 (SHLR…NDMP) and 180–237 (THIE…CYLS). The 125-residue stretch at 287–411 (RYKGNWTIEN…DGKLTINIDV (125 aa)) folds into the MATH domain.

Belongs to the TNF receptor-associated factor family. A subfamily.

The protein localises to the cytoplasm. In terms of biological role, probable adapter protein and signal transducer that links members of the tumor necrosis factor receptor family to different signaling pathways by association with the receptor cytoplasmic domain and kinases. This is TNF receptor-associated factor family protein DDB_G0277243 from Dictyostelium discoideum (Social amoeba).